The following is a 262-amino-acid chain: 3-methyl-2-oxobutanoate hydroxymethyltransferase (262 aa).

The Mg(2+) site is built by Asp-44 and Asp-83. Residues 44-45 (DS), Asp-83, and Lys-112 contribute to the 3-methyl-2-oxobutanoate site. Glu-114 is a Mg(2+) binding site. The Proton acceptor role is filled by Glu-180.

It belongs to the PanB family. In terms of assembly, homodecamer; pentamer of dimers. It depends on Mg(2+) as a cofactor.

Its subcellular location is the cytoplasm. It catalyses the reaction 3-methyl-2-oxobutanoate + (6R)-5,10-methylene-5,6,7,8-tetrahydrofolate + H2O = 2-dehydropantoate + (6S)-5,6,7,8-tetrahydrofolate. Its pathway is cofactor biosynthesis; (R)-pantothenate biosynthesis; (R)-pantoate from 3-methyl-2-oxobutanoate: step 1/2. In terms of biological role, catalyzes the reversible reaction in which hydroxymethyl group from 5,10-methylenetetrahydrofolate is transferred onto alpha-ketoisovalerate to form ketopantoate. This chain is 3-methyl-2-oxobutanoate hydroxymethyltransferase, found in Chromobacterium violaceum (strain ATCC 12472 / DSM 30191 / JCM 1249 / CCUG 213 / NBRC 12614 / NCIMB 9131 / NCTC 9757 / MK).